A 309-amino-acid polypeptide reads, in one-letter code: ADP-L-glycero-D-manno-heptose-6-epimerase (309 aa).

Residues 10-11, 31-32, Lys38, Lys53, 75-79, and Asn92 contribute to the NADP(+) site; these read LI, DN, and QGACS. Tyr139 serves as the catalytic Proton acceptor. Position 143 (Lys143) interacts with NADP(+). Substrate is bound at residue Asn168. Val169 and Lys177 together coordinate NADP(+). The active-site Proton acceptor is the Lys177. Residues Ser179, His186, 200–203, Arg208, and Tyr271 each bind substrate; that span reads FAGS.

Belongs to the NAD(P)-dependent epimerase/dehydratase family. HldD subfamily. Homopentamer. The cofactor is NADP(+).

The catalysed reaction is ADP-D-glycero-beta-D-manno-heptose = ADP-L-glycero-beta-D-manno-heptose. Its pathway is nucleotide-sugar biosynthesis; ADP-L-glycero-beta-D-manno-heptose biosynthesis; ADP-L-glycero-beta-D-manno-heptose from D-glycero-beta-D-manno-heptose 7-phosphate: step 4/4. Functionally, catalyzes the interconversion between ADP-D-glycero-beta-D-manno-heptose and ADP-L-glycero-beta-D-manno-heptose via an epimerization at carbon 6 of the heptose. The chain is ADP-L-glycero-D-manno-heptose-6-epimerase from Histophilus somni (strain 2336) (Haemophilus somnus).